Consider the following 320-residue polypeptide: Putative thiosulfate sulfurtransferase 2 (320 aa).

2 Rhodanese domains span residues 18-125 and 154-267; these read HAPK…PLSS and AINV…HACP. Cys-233 functions as the Cysteine persulfide intermediate in the catalytic mechanism. Arg-238 serves as a coordination point for substrate.

The catalysed reaction is thiosulfate + hydrogen cyanide = thiocyanate + sulfite + 2 H(+). May be a sulfotransferase involved in the formation of thiosulfate. The protein is Putative thiosulfate sulfurtransferase 2 (cysA2) of Mycobacterium bovis (strain ATCC BAA-935 / AF2122/97).